A 146-amino-acid chain; its full sequence is Hemoglobin subunit beta (146 aa).

Position 1 is an N-acetylvaline (valine 1). One can recognise a Globin domain in the interval 2 to 146; that stretch reads HLTDAEKALV…VATALAHKYH (145 aa). The residue at position 12 (threonine 12) is a Phosphothreonine. Serine 44 is subject to Phosphoserine. N6-acetyllysine is present on lysine 59. Residue histidine 63 coordinates heme b. At lysine 82 the chain carries N6-acetyllysine. Residue histidine 92 coordinates heme b. Residue cysteine 93 is modified to S-nitrosocysteine. Residue lysine 144 is modified to N6-acetyllysine.

Belongs to the globin family. As to quaternary structure, heterotetramer of two alpha chains and two beta chains. As to expression, red blood cells.

In terms of biological role, involved in oxygen transport from the lung to the various peripheral tissues. The polypeptide is Hemoglobin subunit beta (Peromyscus crinitus (Canyon mouse)).